A 510-amino-acid polypeptide reads, in one-letter code: NAD(P)H-quinone oxidoreductase subunit 2 A, chloroplastic (510 aa).

A run of 13 helical transmembrane segments spans residues 24–44 (LLLF…GLIL), 57–77 (IPWL…ALLF), 99–119 (IFQF…VEYI), 124–144 (MAIT…MFLC), 149–169 (LITI…LSGY), 183–203 (YLLM…WLYG), 227–247 (PGIS…LSPA), 295–315 (WHLL…LIAI), 323–343 (MLAY…IVGD), 354–374 (YMLF…LFGL), 395–415 (ALSL…AGFF), 418–438 (LYLF…IGLL), and 484–504 (MIVC…IIAI).

This sequence belongs to the complex I subunit 2 family. As to quaternary structure, NDH is composed of at least 16 different subunits, 5 of which are encoded in the nucleus.

It localises to the plastid. It is found in the chloroplast thylakoid membrane. The enzyme catalyses a plastoquinone + NADH + (n+1) H(+)(in) = a plastoquinol + NAD(+) + n H(+)(out). It carries out the reaction a plastoquinone + NADPH + (n+1) H(+)(in) = a plastoquinol + NADP(+) + n H(+)(out). Functionally, NDH shuttles electrons from NAD(P)H:plastoquinone, via FMN and iron-sulfur (Fe-S) centers, to quinones in the photosynthetic chain and possibly in a chloroplast respiratory chain. The immediate electron acceptor for the enzyme in this species is believed to be plastoquinone. Couples the redox reaction to proton translocation, and thus conserves the redox energy in a proton gradient. The chain is NAD(P)H-quinone oxidoreductase subunit 2 A, chloroplastic from Solanum bulbocastanum (Wild potato).